Reading from the N-terminus, the 533-residue chain is MEQKNLNINQASGSKINTELAVPIFQSRRRHRPRQGLKRKKGFKRDDDSGGSSESSNEDMRDNIPIVSGRKKTVRLNRLQRESEQFENSALKDINVEYQSNLSATGESVNTTTVSAINEDTREVILGRPSPKLANQSTLPTELFQSQNDYSRFLPKRKDFEKKSQVGPVLSSNASTVRMNTIIDYQPDVCKDYKLTGYCGYGDTCKFLHMREDYKAGWQLDREWDSVQEKYKKGAKLEEGMVKNEKKEDIPFVCLICKKDYRSPIATTCGHHFCEQCAITRYRKTPTCIQCGADTKGLFSVDKNFDRLLKNRKSKNDEAVKQKVGGFESNNSATTEVSERKDREASFQGFADTLAKPNTSAQQKMPSLGDNSNTIISKYFIREITESNIVHFKRLVRVVLEASYSDKFYRLVLKNPDYARIATFEDKFVGAISSLVAEDNSLYVTVLCVLAPYRCLGIGSLLIDHVKKTAINNNIDRISLHVQTTNESVIKWYTAHGFKIVKQINDFYRRLENKSAFYMVCPLSAHNNIISNH.

A compositionally biased stretch (polar residues) spans 1–17 (MEQKNLNINQASGSKIN). Residues 1–69 (MEQKNLNINQ…MRDNIPIVSG (69 aa)) are disordered. Positions 27–43 (SRRRHRPRQGLKRKKGF) are enriched in basic residues. The C3H1-type zinc-finger motif lies at 184-212 (DYQPDVCKDYKLTGYCGYGDTCKFLHMRE). Residues 254-292 (CLICKKDYRSPIATTCGHHFCEQCAITRYRKTPTCIQCG) form an RING-type zinc finger. In terms of domain architecture, N-acetyltransferase spans 379-524 (YFIREITESN…SAFYMVCPLS (146 aa)).

It belongs to the CWC24 family. As to quaternary structure, belongs to the 40S cdc5-associated complex (or cwf complex), a spliceosome sub-complex reminiscent of a late-stage spliceosome composed of the U2, U5 and U6 snRNAs and at least brr2, cdc5, cwf2/prp3, cwf3/syf1, cwf4/syf3, cwf5/ecm2, spp42/cwf6, cwf7/spf27, cwf8, cwf9, cwf10, cwf11, cwf12, prp45/cwf13, cwf14, cwf15, cwf16, cwf17, cwf18, cwf19, cwf20, cwf21, cwf22, cwf23, cwf24, cwf25, cwf26, cyp7/cwf27, cwf28, cwf29/ist3, lea1, msl1, prp5/cwf1, prp10, prp12/sap130, prp17, prp22, sap61, sap62, sap114, sap145, slu7, smb1, smd1, smd3, smf1, smg1 and syf2.

The protein resides in the nucleus. Involved in mRNA splicing. The polypeptide is Pre-mRNA-splicing factor cwf24 (cwf24) (Schizosaccharomyces pombe (strain 972 / ATCC 24843) (Fission yeast)).